Consider the following 366-residue polypeptide: Beta sliding clamp (366 aa).

It belongs to the beta sliding clamp family. Forms a ring-shaped head-to-tail homodimer around DNA which binds and tethers DNA polymerases and other proteins to the DNA. The DNA replisome complex has a single clamp-loading complex (3 tau and 1 each of delta, delta', psi and chi subunits) which binds 3 Pol III cores (1 core on the leading strand and 2 on the lagging strand) each with a beta sliding clamp dimer. Additional proteins in the replisome are other copies of gamma, psi and chi, Ssb, DNA helicase and RNA primase.

Its subcellular location is the cytoplasm. Functionally, confers DNA tethering and processivity to DNA polymerases and other proteins. Acts as a clamp, forming a ring around DNA (a reaction catalyzed by the clamp-loading complex) which diffuses in an ATP-independent manner freely and bidirectionally along dsDNA. Initially characterized for its ability to contact the catalytic subunit of DNA polymerase III (Pol III), a complex, multichain enzyme responsible for most of the replicative synthesis in bacteria; Pol III exhibits 3'-5' exonuclease proofreading activity. The beta chain is required for initiation of replication as well as for processivity of DNA replication. The sequence is that of Beta sliding clamp (dnaN) from Buchnera aphidicola subsp. Rhopalosiphum padi.